A 304-amino-acid chain; its full sequence is Recombination-associated protein RdgC (304 aa).

It belongs to the RdgC family.

The protein localises to the cytoplasm. It localises to the nucleoid. Functionally, may be involved in recombination. This chain is Recombination-associated protein RdgC, found in Shewanella oneidensis (strain ATCC 700550 / JCM 31522 / CIP 106686 / LMG 19005 / NCIMB 14063 / MR-1).